A 548-amino-acid polypeptide reads, in one-letter code: MRTSPSSQLSLHGVTKRYDDRVVLSQVSLAISPGEKAGIIGDNGAGKSTLLRLLAGEERPDAGEVTVIAPGGVGYLPQTLGLPPRATVQDAIDLAMTELRVLEAELRRTEAALAEAATDEALQDALTAYARLTEQYEVRDGYGADARVDAALHGLGLPGLPRDRRLGTLSGGERSRLALAATLASQPELLLLDEPTNDLDDRAVHWLEEHLSGHRGTVVTVTHDRVFLDRLTATVLEVDGRGVSRHGDGYAGYLAAKAAERRRRQQQYDEWRAELDRNRRLAEANVARLDGIPRKMGKAAFGHGAFRARGRDHGAMSRVRNAKERVERLTANPVAPPADRLSLTARIATADGPGEAPAAELDGVVVGSRLRVPKLRLGAAERLLITGPNGAGKSTLLSVLAGELSPDAGAVSVPGRVGHLRQEETPWPAKLTVLEAFAHNRPGDRDEQADRRLSLGLFEPEALRLRVGELSYGQRRRIELARLVSEPVGLLLLDEPTNHLSPALVEELEEALTGYGGALVLVTHDRRMRSRFTGSHLELREGVVSGAR.

2 ABC transporter domains span residues 9–265 (LSLH…RRRQ) and 347–547 (IATA…VSGA). ATP is bound by residues 41–48 (GDNGAGKS) and 387–394 (GPNGAGKS).

The protein belongs to the ABC transporter superfamily.

It localises to the cell membrane. Its function is as follows. Responsible for tylosin resistance, and is proposed to be a subunit of a multicomponent export system for the energy-dependent efflux of tylosin. The chain is Tylosin resistance ATP-binding protein TlrC (tlrC) from Streptomyces fradiae (Streptomyces roseoflavus).